Here is a 248-residue protein sequence, read N- to C-terminus: Urease accessory protein UreG 1 (248 aa).

Basic and acidic residues predominate over residues 1-14 (MLPEHHDHGHEHGG). Residues 1–36 (MLPEHHDHGHEHGGNGHGHGHRHQVNFDPTAAEPDP) are disordered. 53-60 (GPVGSGKT) is a GTP binding site.

This sequence belongs to the SIMIBI class G3E GTPase family. UreG subfamily. As to quaternary structure, homodimer. UreD, UreF and UreG form a complex that acts as a GTP-hydrolysis-dependent molecular chaperone, activating the urease apoprotein by helping to assemble the nickel containing metallocenter of UreC. The UreE protein probably delivers the nickel.

Its subcellular location is the cytoplasm. In terms of biological role, facilitates the functional incorporation of the urease nickel metallocenter. This process requires GTP hydrolysis, probably effectuated by UreG. The sequence is that of Urease accessory protein UreG 1 from Saccharopolyspora erythraea (strain ATCC 11635 / DSM 40517 / JCM 4748 / NBRC 13426 / NCIMB 8594 / NRRL 2338).